The primary structure comprises 120 residues: Large ribosomal subunit protein uL22 (120 aa).

This sequence belongs to the universal ribosomal protein uL22 family. In terms of assembly, part of the 50S ribosomal subunit.

Functionally, this protein binds specifically to 23S rRNA; its binding is stimulated by other ribosomal proteins, e.g. L4, L17, and L20. It is important during the early stages of 50S assembly. It makes multiple contacts with different domains of the 23S rRNA in the assembled 50S subunit and ribosome. The globular domain of the protein is located near the polypeptide exit tunnel on the outside of the subunit, while an extended beta-hairpin is found that lines the wall of the exit tunnel in the center of the 70S ribosome. The polypeptide is Large ribosomal subunit protein uL22 (Acaryochloris marina (strain MBIC 11017)).